The following is a 335-amino-acid chain: dTDP-glucose 4,6-dehydratase (335 aa).

NAD(+)-binding positions include 11-12 (FI), 38-41 (DKLT), 61-62 (DI), 81-85 (FAAET), and Thr-100. Thr-85 contributes to the substrate binding site. Thr-125 provides a ligand contact to substrate. The active-site Proton donor is Asp-126. Residues Glu-127 and Tyr-149 each act as proton acceptor in the active site. Residue 149–153 (YSASK) participates in NAD(+) binding. Asn-178 contributes to the substrate binding site. Asn-179 lines the NAD(+) pocket. Substrate is bound by residues 188–189 (KI), 204–206 (PLY), Arg-213, Asn-248, and 271–275 (DRKGH).

This sequence belongs to the NAD(P)-dependent epimerase/dehydratase family. dTDP-glucose dehydratase subfamily. It depends on NAD(+) as a cofactor.

It carries out the reaction dTDP-alpha-D-glucose = dTDP-4-dehydro-6-deoxy-alpha-D-glucose + H2O. The protein operates within antibiotic biosynthesis. Its function is as follows. Involved in the biosynthesis of the two 2,6-deoxysugars, dTDP-L-oleandrose and dTDP-D-desosamine, attached to the macrolactone ring oleandolide to produce the aglycone antibiotic oleandomycin. Catalyzes the dehydration of dTDP-D-glucose to form dTDP-6-deoxy-D-xylo-4-hexulose via a three-step process involving oxidation, dehydration and reduction. The polypeptide is dTDP-glucose 4,6-dehydratase (Streptomyces antibioticus).